A 77-amino-acid polypeptide reads, in one-letter code: U8-lycotoxin-Ls1s (77 aa).

The N-terminal stretch at 1–20 is a signal peptide; that stretch reads MKLIIFTGLVLFAIVSLIEA. Residues 21-26 constitute a propeptide that is removed on maturation; that stretch reads QAENER.

This sequence belongs to the neurotoxin 19 (CSTX) family. 08 (U8-Lctx) subfamily. In terms of processing, contains 4 disulfide bonds. As to expression, expressed by the venom gland.

The protein localises to the secreted. This Lycosa singoriensis (Wolf spider) protein is U8-lycotoxin-Ls1s.